Here is a 449-residue protein sequence, read N- to C-terminus: Phosphoglucosamine mutase (449 aa).

S101 acts as the Phosphoserine intermediate in catalysis. Mg(2+)-binding residues include S101, D240, D242, and D244. Phosphoserine is present on S101.

This sequence belongs to the phosphohexose mutase family. Requires Mg(2+) as cofactor. Post-translationally, activated by phosphorylation.

It catalyses the reaction alpha-D-glucosamine 1-phosphate = D-glucosamine 6-phosphate. In terms of biological role, catalyzes the conversion of glucosamine-6-phosphate to glucosamine-1-phosphate. The chain is Phosphoglucosamine mutase from Streptococcus mutans serotype c (strain ATCC 700610 / UA159).